Consider the following 434-residue polypeptide: Tryptophan synthase beta chain 2 (434 aa).

The residue at position 110 (lysine 110) is an N6-(pyridoxal phosphate)lysine.

Belongs to the TrpB family. As to quaternary structure, tetramer of two alpha and two beta chains. Requires pyridoxal 5'-phosphate as cofactor.

The enzyme catalyses (1S,2R)-1-C-(indol-3-yl)glycerol 3-phosphate + L-serine = D-glyceraldehyde 3-phosphate + L-tryptophan + H2O. The protein operates within amino-acid biosynthesis; L-tryptophan biosynthesis; L-tryptophan from chorismate: step 5/5. The beta subunit is responsible for the synthesis of L-tryptophan from indole and L-serine. The polypeptide is Tryptophan synthase beta chain 2 (trpB2) (Aquifex aeolicus (strain VF5)).